Here is a 181-residue protein sequence, read N- to C-terminus: Adenine phosphoribosyltransferase (181 aa).

This sequence belongs to the purine/pyrimidine phosphoribosyltransferase family. Homodimer.

It is found in the cytoplasm. The catalysed reaction is AMP + diphosphate = 5-phospho-alpha-D-ribose 1-diphosphate + adenine. Its pathway is purine metabolism; AMP biosynthesis via salvage pathway; AMP from adenine: step 1/1. In terms of biological role, catalyzes a salvage reaction resulting in the formation of AMP, that is energically less costly than de novo synthesis. In Cytophaga hutchinsonii (strain ATCC 33406 / DSM 1761 / CIP 103989 / NBRC 15051 / NCIMB 9469 / D465), this protein is Adenine phosphoribosyltransferase.